Reading from the N-terminus, the 417-residue chain is Neuropeptide FF receptor 2 (417 aa).

Residues 1–45 (MSEKWDSNSSESWNHIWSGNDTQHHWYSDINITYVNYYLHQPQVA) lie on the Extracellular side of the membrane. Asparagine 8, asparagine 20, and asparagine 31 each carry an N-linked (GlcNAc...) asparagine glycan. The helical transmembrane segment at 46 to 66 (AVFISSYLLIFVLCMVGNTVV) threads the bilayer. At 67 to 82 (CFIVIRNRHMHTVTNF) the chain is on the cytoplasmic side. Residues 83 to 103 (FILNLAISDLLVGIFCMPITL) traverse the membrane as a helical segment. The Extracellular segment spans residues 104-119 (LDNIIAGWPFGSSMCK). Cysteine 118 and cysteine 206 are joined by a disulfide. The helical transmembrane segment at 120-140 (ISGLVQGISVAASVFTLVAIA) threads the bilayer. Over 141–160 (VDRFRCVVYPFKPKLTVKTA) the chain is Cytoplasmic. The helical transmembrane segment at 161 to 181 (FVTIVIIWGLAIAIMTPSAIM) threads the bilayer. At 182–217 (LHVQEEKYYRVRLSSHNKTSTVYWCREDWPRHEMRR) the chain is on the extracellular side. N-linked (GlcNAc...) asparagine glycosylation is present at asparagine 198. A helical membrane pass occupies residues 218–238 (IYTTVLFATIYLAPLSLIVIM). Over 239-274 (YARIGASLFKTAAHCTGKQRPVQWHVSKKKQKVIKM) the chain is Cytoplasmic. Residues 275–295 (LLTVALLFILSWLPLWTLMML) form a helical membrane-spanning segment. The Extracellular portion of the chain corresponds to 296–310 (SDYTDLSPNKLRIIN). A helical transmembrane segment spans residues 311–331 (IYIYPFAHWLAFCNSSVNPII). Residues 332–417 (YGFFNENFRN…MGEATNSTVA (86 aa)) are Cytoplasmic-facing. Residues 382-401 (SQNPGGENLGCGKSADNPTQ) are disordered.

This sequence belongs to the G-protein coupled receptor 1 family.

Its subcellular location is the cell membrane. Functionally, receptor for NPAF (A-18-F-amide) and NPFF (F-8-F-amide) neuropeptides, also known as morphine-modulating peptides. Can also be activated by a variety of naturally occurring or synthetic FMRF-amide like ligands. This receptor mediates its action by association with G proteins that activate a phosphatidylinositol-calcium second messenger system. This Mus musculus (Mouse) protein is Neuropeptide FF receptor 2 (Npffr2).